Reading from the N-terminus, the 162-residue chain is Large ribosomal subunit protein uL10 (162 aa).

It belongs to the universal ribosomal protein uL10 family. As to quaternary structure, part of the ribosomal stalk of the 50S ribosomal subunit. The N-terminus interacts with L11 and the large rRNA to form the base of the stalk. The C-terminus forms an elongated spine to which L12 dimers bind in a sequential fashion forming a multimeric L10(L12)X complex.

In terms of biological role, forms part of the ribosomal stalk, playing a central role in the interaction of the ribosome with GTP-bound translation factors. The polypeptide is Large ribosomal subunit protein uL10 (Borreliella afzelii (strain PKo) (Borrelia afzelii)).